We begin with the raw amino-acid sequence, 275 residues long: Endolytic peptidoglycan transglycosylase RlpA (275 aa).

A signal peptide spans 1 to 22 (MQIKTITLKLSAVSLGALFFSG). Cys-23 carries N-palmitoyl cysteine lipidation. Cys-23 carries the S-diacylglycerol cysteine lipid modification. Residues 200–275 (IYEGGNFMVQ…AFAGAFVVRE (76 aa)) enclose the SPOR domain.

It belongs to the RlpA family.

It localises to the cell membrane. Its function is as follows. Lytic transglycosylase with a strong preference for naked glycan strands that lack stem peptides. This Campylobacter jejuni subsp. jejuni serotype O:2 (strain ATCC 700819 / NCTC 11168) protein is Endolytic peptidoglycan transglycosylase RlpA.